The following is a 631-amino-acid chain: Alpha-dioxygenase 2 (631 aa).

The first 20 residues, 1–20 (MGFSPSSSWFLHPQLHHVVS), serve as a signal peptide directing secretion. Position 157 (H157) interacts with heme b. Y378 acts as the Proton acceptor in catalysis. A heme b-binding site is contributed by H381. An N-linked (GlcNAc...) asparagine glycan is attached at N583.

Belongs to the peroxidase family. Requires heme b as cofactor. Expressed in seedlings (cotyledons, young leaves, and hypocotyls), flowers, siliques and old leaves.

Functionally, alpha-dioxygenase that catalyzes the primary oxygenation of fatty acids into oxylipins. May be involved in the senescence process. The protein is Alpha-dioxygenase 2 (DOX2) of Arabidopsis thaliana (Mouse-ear cress).